The chain runs to 147 residues: UPF0260 protein CJA_2436 (147 aa).

The protein belongs to the UPF0260 family.

This is UPF0260 protein CJA_2436 from Cellvibrio japonicus (strain Ueda107) (Pseudomonas fluorescens subsp. cellulosa).